The primary structure comprises 172 residues: 3-hydroxydecanoyl-[acyl-carrier-protein] dehydratase (172 aa).

Histidine 71 is a catalytic residue.

It belongs to the thioester dehydratase family. FabA subfamily. In terms of assembly, homodimer.

It is found in the cytoplasm. The enzyme catalyses a (3R)-hydroxyacyl-[ACP] = a (2E)-enoyl-[ACP] + H2O. It carries out the reaction (3R)-hydroxydecanoyl-[ACP] = (2E)-decenoyl-[ACP] + H2O. The catalysed reaction is (2E)-decenoyl-[ACP] = (3Z)-decenoyl-[ACP]. Its pathway is lipid metabolism; fatty acid biosynthesis. In terms of biological role, necessary for the introduction of cis unsaturation into fatty acids. Catalyzes the dehydration of (3R)-3-hydroxydecanoyl-ACP to E-(2)-decenoyl-ACP and then its isomerization to Z-(3)-decenoyl-ACP. Can catalyze the dehydratase reaction for beta-hydroxyacyl-ACPs with saturated chain lengths up to 16:0, being most active on intermediate chain length. The protein is 3-hydroxydecanoyl-[acyl-carrier-protein] dehydratase of Vibrio vulnificus (strain CMCP6).